The sequence spans 2282 residues: Protein Ycf2 (2282 aa).

An ATP-binding site is contributed by 1637 to 1644 (GSIGTGRS).

This sequence belongs to the Ycf2 family.

The protein localises to the plastid. Its subcellular location is the chloroplast stroma. Probable ATPase of unknown function. Its presence in a non-photosynthetic plant (Epifagus virginiana) and experiments in tobacco indicate that it has an essential function which is probably not related to photosynthesis. The protein is Protein Ycf2 of Citrus sinensis (Sweet orange).